The chain runs to 229 residues: Cytochrome c oxidase subunit 2 (229 aa).

Residues 1 to 26 lie on the Mitochondrial intermembrane side of the membrane; that stretch reads MSTWANLGLQDSASPLMEQLIFFHDH. Residues 27–48 form a helical membrane-spanning segment; that stretch reads ALLILVMITILVGYLMFMLFFN. Over 49–62 the chain is Mitochondrial matrix; that stretch reads SYINRFLLHGQLIE. The chain crosses the membrane as a helical span at residues 63–82; it reads MIWTILPAIILLFIAMPSLR. Over 83-229 the chain is Mitochondrial intermembrane; the sequence is LLYLLDEINE…IKWIASKVNS (147 aa). Residues His161, Cys196, Glu198, Cys200, His204, and Met207 each coordinate Cu cation. Glu198 is a Mg(2+) binding site.

Belongs to the cytochrome c oxidase subunit 2 family. Component of the cytochrome c oxidase (complex IV, CIV), a multisubunit enzyme composed of a catalytic core of 3 subunits and several supernumerary subunits. The complex exists as a monomer or a dimer and forms supercomplexes (SCs) in the inner mitochondrial membrane with ubiquinol-cytochrome c oxidoreductase (cytochrome b-c1 complex, complex III, CIII). Cu cation serves as cofactor.

Its subcellular location is the mitochondrion inner membrane. The catalysed reaction is 4 Fe(II)-[cytochrome c] + O2 + 8 H(+)(in) = 4 Fe(III)-[cytochrome c] + 2 H2O + 4 H(+)(out). Component of the cytochrome c oxidase, the last enzyme in the mitochondrial electron transport chain which drives oxidative phosphorylation. The respiratory chain contains 3 multisubunit complexes succinate dehydrogenase (complex II, CII), ubiquinol-cytochrome c oxidoreductase (cytochrome b-c1 complex, complex III, CIII) and cytochrome c oxidase (complex IV, CIV), that cooperate to transfer electrons derived from NADH and succinate to molecular oxygen, creating an electrochemical gradient over the inner membrane that drives transmembrane transport and the ATP synthase. Cytochrome c oxidase is the component of the respiratory chain that catalyzes the reduction of oxygen to water. Electrons originating from reduced cytochrome c in the intermembrane space (IMS) are transferred via the dinuclear copper A center (CU(A)) of subunit 2 and heme A of subunit 1 to the active site in subunit 1, a binuclear center (BNC) formed by heme A3 and copper B (CU(B)). The BNC reduces molecular oxygen to 2 water molecules using 4 electrons from cytochrome c in the IMS and 4 protons from the mitochondrial matrix. This chain is Cytochrome c oxidase subunit 2 (mt:CoII), found in Drosophila bifasciata (Fruit fly).